Here is a 253-residue protein sequence, read N- to C-terminus: MSLVCSVIFIHHAFNANILDKDYAFSDGEILMVDNAVRTHFEPYERHFKEIGFNENTIKKYLQCTNIQTVTVPVPAKFLRASNVPTGLLNEMIAYLNSEERNHHNFSELLLFSCLSIFAACKGFITLLTNGVLSVSGKVRNIVNMKLAHPWKLKDICDCLYISESLLKKKLKQEQTTFSQILLDARMQHAKNLIRVEGSVNKIAEQCGYASTSYFIYAFRKHFGNSPKRVSKEYRCQRHTGMNTGNTMSALAI.

The region spanning 137–233 (GKVRNIVNMK…GNSPKRVSKE (97 aa)) is the HTH araC/xylS-type domain. 2 consecutive DNA-binding regions (H-T-H motif) follow at residues 154–175 (KDICDCLYISESLLKKKLKQEQ) and 200–223 (VNKIAEQCGYASTSYFIYAFRKHF).

In terms of biological role, induces the expression of gadE. Could also regulate the expression of other genes involved in acid resistance. The polypeptide is HTH-type transcriptional regulator YdeO (ydeO) (Shigella flexneri).